Here is a 324-residue protein sequence, read N- to C-terminus: Carbonic anhydrase, chloroplastic (324 aa).

This sequence belongs to the beta-class carbonic anhydrase family. As to quaternary structure, homohexamer.

It localises to the plastid. The protein resides in the chloroplast stroma. It catalyses the reaction hydrogencarbonate + H(+) = CO2 + H2O. Its function is as follows. Reversible hydration of carbon dioxide. The polypeptide is Carbonic anhydrase, chloroplastic (Hordeum vulgare (Barley)).